Reading from the N-terminus, the 737-residue chain is Methylcrotonoyl-CoA carboxylase subunit alpha, mitochondrial (737 aa).

A mitochondrion-targeting transit peptide spans 1 to 33 (MASRLLLLPRRRSRHGGASLLLARLLSSSSSEA). The 448-residue stretch at 38-485 (AVEKVLVANR…DTHFIERYQN (448 aa)) folds into the Biotin carboxylation domain. ATP-binding positions include lysine 153, 185 to 246 (ANKI…PRHI), glutamate 237, and histidine 272. The 199-residue stretch at 157-355 (KRIMGAAGVP…LVEWQIRIAN (199 aa)) folds into the ATP-grasp domain. Mn(2+) contacts are provided by glutamate 312, glutamate 326, and asparagine 328. Arginine 330 is an active-site residue. Residues 636–665 (YRQTLRAEQSPDDSSQPSASSEARSHPKGS) are disordered. Residues 647–657 (DDSSQPSASSE) are compositionally biased toward low complexity. In terms of domain architecture, Biotinyl-binding spans 656–732 (SEARSHPKGS…FDSSVLFTVK (77 aa)). N6-biotinyllysine is present on lysine 698.

As to quaternary structure, probably a heterodimer composed of biotin-containing alpha subunits and beta subunits. Requires biotin as cofactor. It depends on Mn(2+) as a cofactor.

The protein localises to the mitochondrion matrix. It catalyses the reaction 3-methylbut-2-enoyl-CoA + hydrogencarbonate + ATP = 3-methyl-(2E)-glutaconyl-CoA + ADP + phosphate + H(+). Its pathway is amino-acid degradation; L-leucine degradation; (S)-3-hydroxy-3-methylglutaryl-CoA from 3-isovaleryl-CoA: step 2/3. In terms of biological role, biotin-attachment subunit of the 3-methylcrotonyl-CoA carboxylase, an enzyme that catalyzes the conversion of 3-methylcrotonyl-CoA to 3-methylglutaconyl-CoA, a critical step for leucine and isovaleric acid catabolism. This chain is Methylcrotonoyl-CoA carboxylase subunit alpha, mitochondrial (MCCA), found in Oryza sativa subsp. japonica (Rice).